The following is a 526-amino-acid chain: Probable feruloyl esterase B (526 aa).

The first 18 residues, 1-18 (MARLSLLTLLALGSAALA), serve as a signal peptide directing secretion. Intrachain disulfides connect cysteine 27–cysteine 74 and cysteine 62–cysteine 113. Asparagine 137 carries an N-linked (GlcNAc...) asparagine glycan. 4 disulfide bridges follow: cysteine 186–cysteine 441, cysteine 255–cysteine 272, cysteine 281–cysteine 291, and cysteine 503–cysteine 525. Residue serine 187 is the Acyl-ester intermediate of the active site. N-linked (GlcNAc...) asparagine glycosylation is present at asparagine 233. Residues aspartate 256, aspartate 259, alanine 261, aspartate 263, and isoleucine 265 each contribute to the Ca(2+) site. N-linked (GlcNAc...) asparagine glycosylation occurs at asparagine 311. Catalysis depends on charge relay system residues aspartate 400 and histidine 440. Residue asparagine 516 is glycosylated (N-linked (GlcNAc...) asparagine).

This sequence belongs to the tannase family.

It is found in the secreted. The enzyme catalyses feruloyl-polysaccharide + H2O = ferulate + polysaccharide.. Involved in degradation of plant cell walls. Hydrolyzes the feruloyl-arabinose ester bond in arabinoxylans as well as the feruloyl-galactose and feruloyl-arabinose ester bonds in pectin. The sequence is that of Probable feruloyl esterase B (faeB) from Aspergillus clavatus (strain ATCC 1007 / CBS 513.65 / DSM 816 / NCTC 3887 / NRRL 1 / QM 1276 / 107).